We begin with the raw amino-acid sequence, 196 residues long: Pyridoxal 5'-phosphate synthase subunit PdxT (196 aa).

Position 47–49 (G47–S49) interacts with L-glutamine. Residue C79 is the Nucleophile of the active site. L-glutamine-binding positions include R106 and I134–R135. Residues H170 and E172 each act as charge relay system in the active site.

The protein belongs to the glutaminase PdxT/SNO family. In terms of assembly, in the presence of PdxS, forms a dodecamer of heterodimers. Only shows activity in the heterodimer.

It carries out the reaction aldehydo-D-ribose 5-phosphate + D-glyceraldehyde 3-phosphate + L-glutamine = pyridoxal 5'-phosphate + L-glutamate + phosphate + 3 H2O + H(+). The enzyme catalyses L-glutamine + H2O = L-glutamate + NH4(+). The protein operates within cofactor biosynthesis; pyridoxal 5'-phosphate biosynthesis. In terms of biological role, catalyzes the hydrolysis of glutamine to glutamate and ammonia as part of the biosynthesis of pyridoxal 5'-phosphate. The resulting ammonia molecule is channeled to the active site of PdxS. The protein is Pyridoxal 5'-phosphate synthase subunit PdxT of Bacillus mycoides (strain KBAB4) (Bacillus weihenstephanensis).